Reading from the N-terminus, the 323-residue chain is Peroxisomal targeting signal 2 receptor (323 aa).

WD repeat units lie at residues aspartate 65–aspartate 96, glutamate 109–aspartate 141, glycine 153–aspartate 184, alanine 196–aspartate 227, glycine 240–asparagine 271, and histidine 284–aspartate 315.

This sequence belongs to the WD repeat peroxin-7 family. Interacts with PEX5; interaction only takes place when PEX7 is associated with cargo proteins. Interacts with VWA8. In terms of tissue distribution, ubiquitous. Highest expression in pancreas, skeletal muscle and heart.

Its subcellular location is the cytoplasm. It localises to the cytosol. The protein localises to the peroxisome matrix. In terms of biological role, receptor required for the peroxisomal import of proteins containing a C-terminal PTS2-type peroxisomal targeting signal. Specifically binds to cargo proteins containing a PTS2 peroxisomal targeting signal in the cytosol. Cargo protein-binding triggers interaction with PEX5 and formation of a ternary complex composed of PEX5 and PEX7 along with PTS2-containing cargo proteins, which is tranlocated into peroxisomes by passing through the PEX13-PEX14 docking complex. The polypeptide is Peroxisomal targeting signal 2 receptor (Homo sapiens (Human)).